A 141-amino-acid chain; its full sequence is MALERTFSIVKPDAVERNLIGEIYNRIEKAGLRIIAAKMVHLTEEQASGFYAEHEGKEFFQPLKEFMTSGPIMVQVLEGENAIARYRELMGKTNPEEAAAGTLRADYALSMRHNSVHGSDSPESAAREIEFFFPESEICPR.

Positions 11, 59, 87, 93, 104, and 114 each coordinate ATP. The active-site Pros-phosphohistidine intermediate is the His117.

It belongs to the NDK family. Homotetramer. Mg(2+) is required as a cofactor.

The protein localises to the cytoplasm. The catalysed reaction is a 2'-deoxyribonucleoside 5'-diphosphate + ATP = a 2'-deoxyribonucleoside 5'-triphosphate + ADP. The enzyme catalyses a ribonucleoside 5'-diphosphate + ATP = a ribonucleoside 5'-triphosphate + ADP. In terms of biological role, major role in the synthesis of nucleoside triphosphates other than ATP. The ATP gamma phosphate is transferred to the NDP beta phosphate via a ping-pong mechanism, using a phosphorylated active-site intermediate. The protein is Nucleoside diphosphate kinase of Vibrio parahaemolyticus serotype O3:K6 (strain RIMD 2210633).